Here is a 356-residue protein sequence, read N- to C-terminus: Cysteine protease XCP2 (356 aa).

Residues 1–26 (MALSSPSRILCFALALSAASLSLSFA) form the signal peptide. The propeptide at 27 to 137 (SSHDYSIVGY…AEFAYRDVEA (111 aa)) is activation peptide. 3 disulfides stabilise this stretch: Cys159–Cys201, Cys193–Cys234, and Cys292–Cys343. The active site involves Cys162. Asn181 carries an N-linked (GlcNAc...) asparagine glycan. Catalysis depends on residues His298 and Asn318.

This sequence belongs to the peptidase C1 family. Interacts with PRN2. Mostly expressed in roots, stems and flowers. Confined to tracheary elements, and specifically to xylem.

It localises to the vacuole. Its subcellular location is the cell membrane. In terms of biological role, cysteine protease involved in xylem tracheary element (TE) autolysis during xylogenesis in roots. Participates in micro autolysis within the intact central vacuole before mega autolysis is initiated by tonoplast implosion. Involved in susceptibility to the bacterial plant pathogen Ralstonia solanacearum. The protein is Cysteine protease XCP2 of Arabidopsis thaliana (Mouse-ear cress).